Reading from the N-terminus, the 104-residue chain is Large ribosomal subunit protein uL24 (104 aa).

The protein belongs to the universal ribosomal protein uL24 family. As to quaternary structure, part of the 50S ribosomal subunit.

Functionally, one of two assembly initiator proteins, it binds directly to the 5'-end of the 23S rRNA, where it nucleates assembly of the 50S subunit. In terms of biological role, one of the proteins that surrounds the polypeptide exit tunnel on the outside of the subunit. The sequence is that of Large ribosomal subunit protein uL24 from Shewanella woodyi (strain ATCC 51908 / MS32).